A 105-amino-acid chain; its full sequence is Replication initiation control protein YabA (105 aa).

Positions 79, 81, 95, and 98 each coordinate Zn(2+).

Belongs to the YabA family. Homotetramer. Interacts with both DnaA and DnaN, acting as a bridge between these two proteins. Zn(2+) is required as a cofactor.

Its subcellular location is the cytoplasm. It is found in the nucleoid. Functionally, involved in control of chromosome replication initiation. Inhibits the cooperative binding of DnaA to the oriC region, thus negatively regulating initiation of chromosome replication. Inhibits the ability of DnaA-ATP to form a helix on DNA; does not disassemble preformed DnaA-DNA helices. Decreases the residence time of DnaA on the chromosome at its binding sites (oriC, replication forks and promoter-binding sites). Tethers DnaA to the replication machinery via the DNA polymerase beta sliding clamp subunit (dnaN). Associates with oriC and other DnaA targets on the chromosome in a DnaA-dependent manner. This is Replication initiation control protein YabA from Streptococcus pneumoniae serotype 2 (strain D39 / NCTC 7466).